The primary structure comprises 319 residues: Glycine--tRNA ligase alpha subunit (319 aa).

Belongs to the class-II aminoacyl-tRNA synthetase family. In terms of assembly, tetramer of two alpha and two beta subunits.

The protein resides in the cytoplasm. It catalyses the reaction tRNA(Gly) + glycine + ATP = glycyl-tRNA(Gly) + AMP + diphosphate. This chain is Glycine--tRNA ligase alpha subunit, found in Coxiella burnetii (strain CbuK_Q154) (Coxiella burnetii (strain Q154)).